Consider the following 154-residue polypeptide: MQLKALLEPLVTRMGYQLWGMEFRVAKHSALLRLFIDSEQGITLDDCTEVSRQVSALMDVEDPIQVPYTLEVSSPGVDRPLFEAGQYARYVGEQVRVRTQWPIDGQRNFAGAIVSADEDSVTLDVDGREVRLPLEAIARGRLKGTLPPATQVEE.

This sequence belongs to the RimP family.

It is found in the cytoplasm. Its function is as follows. Required for maturation of 30S ribosomal subunits. The sequence is that of Ribosome maturation factor RimP from Thioalkalivibrio sulfidiphilus (strain HL-EbGR7).